We begin with the raw amino-acid sequence, 443 residues long: dTDP-4-dehydro-6-deoxy-alpha-D-glucopyranose 2,3-dehydratase (443 aa).

DTDP-4-dehydro-6-deoxy-alpha-D-glucose contacts are provided by residues Trp-35, 118-122 (TFSNY), Ser-157, Trp-260, Arg-325, 341-343 (QCN), 346-347 (NL), and 377-380 (EGGR).

The protein belongs to the hexose 2,3-dehydratase family. As to quaternary structure, homodimer.

It carries out the reaction dTDP-4-dehydro-6-deoxy-alpha-D-glucose = dTDP-3,4-didehydro-2,6-dideoxy-alpha-D-glucose + H2O. Its pathway is antibiotic biosynthesis; granaticin biosynthesis. Functionally, involved in the biosynthesis of the 2,6-deoxysugar, dTDP-L-rhodinose, attached to the benzoisochromane quinone chromophore to produce the aglycone antibiotics granaticin and granaticin B. Catalyzes the removal of the hydroxyl group at position C-2 of the hexose ring of dTDP-4-dehydro-6-deoxy-alpha-D-glucopyranose, and the oxidation of the hydroxyl group at position C-3 to form a carbonyl functionality. The product of the reaction, dTDP-2,6-dideoxy-D-glycero-hex-2-enos-4-ulose, is a highly unstable diketosugar, which spontaneously forms dTDP-3,4-didehydro-2,6-dideoxy-alpha-D-glucose. The polypeptide is dTDP-4-dehydro-6-deoxy-alpha-D-glucopyranose 2,3-dehydratase (Streptomyces violaceoruber).